Consider the following 341-residue polypeptide: Anthranilate phosphoribosyltransferase (341 aa).

5-phospho-alpha-D-ribose 1-diphosphate contacts are provided by residues G80, 83 to 84 (GD), T88, 90 to 93 (NIST), 108 to 116 (KHGNYSVSS), and S120. Anthranilate is bound at residue G80. Residue S92 participates in Mg(2+) binding. N111 is an anthranilate binding site. Residue R166 coordinates anthranilate. Positions 224 and 225 each coordinate Mg(2+).

The protein belongs to the anthranilate phosphoribosyltransferase family. In terms of assembly, homodimer. Mg(2+) is required as a cofactor.

The enzyme catalyses N-(5-phospho-beta-D-ribosyl)anthranilate + diphosphate = 5-phospho-alpha-D-ribose 1-diphosphate + anthranilate. It participates in amino-acid biosynthesis; L-tryptophan biosynthesis; L-tryptophan from chorismate: step 2/5. Its function is as follows. Catalyzes the transfer of the phosphoribosyl group of 5-phosphorylribose-1-pyrophosphate (PRPP) to anthranilate to yield N-(5'-phosphoribosyl)-anthranilate (PRA). The chain is Anthranilate phosphoribosyltransferase from Haloquadratum walsbyi (strain DSM 16790 / HBSQ001).